Here is a 195-residue protein sequence, read N- to C-terminus: dTTP/UTP pyrophosphatase (195 aa).

Asp-73 (proton acceptor) is an active-site residue.

The protein belongs to the Maf family. YhdE subfamily. It depends on a divalent metal cation as a cofactor.

The protein resides in the cytoplasm. It catalyses the reaction dTTP + H2O = dTMP + diphosphate + H(+). The catalysed reaction is UTP + H2O = UMP + diphosphate + H(+). In terms of biological role, nucleoside triphosphate pyrophosphatase that hydrolyzes dTTP and UTP. May have a dual role in cell division arrest and in preventing the incorporation of modified nucleotides into cellular nucleic acids. The chain is dTTP/UTP pyrophosphatase from Deinococcus radiodurans (strain ATCC 13939 / DSM 20539 / JCM 16871 / CCUG 27074 / LMG 4051 / NBRC 15346 / NCIMB 9279 / VKM B-1422 / R1).